The primary structure comprises 199 residues: MKQSHFFAHLSRLKLINRWPLMRNVRTENVSEHSLQVAMVAHALAAIKNRKFGGNVNAERIALLAMYHDASEVLTGDLPTPVKYFNSQIAKEYKAIEKIAQQKLVDMVPEELQDIFAPLIDEHAYSDEEKSLVKQADALCAYLKCLEELAAGNNEFLLAKTRLEATLEARRSQEMDYFMEVFVPSFHLSLDEISQDSPL.

Residues 18–19 (RW) and histidine 33 each bind substrate. The HD domain occupies 30-142 (VSEHSLQVAM…VKQADALCAY (113 aa)). A divalent metal cation contacts are provided by histidine 33, histidine 68, and aspartate 69. Substrate is bound by residues aspartate 69, 77 to 80 (DLPT), and aspartate 137. Aspartate 137 is a binding site for a divalent metal cation.

The protein belongs to the 5DNU family. In terms of assembly, homodimer. Requires a divalent metal cation as cofactor.

It is found in the cytoplasm. The enzyme catalyses a 2'-deoxyribonucleoside 5'-phosphate + H2O = a 2'-deoxyribonucleoside + phosphate. Functionally, catalyzes the strictly specific dephosphorylation of 2'-deoxyribonucleoside 5'-monophosphates. This chain is 5'-deoxynucleotidase YfbR, found in Escherichia coli O127:H6 (strain E2348/69 / EPEC).